Here is a 182-residue protein sequence, read N- to C-terminus: NADH-dependent FAD reductase (182 aa).

Asp-16 is an NAD(+) binding site. Residues 47 to 48 (NS), 62 to 64 (CVG), and His-98 each bind FAD. NAD(+) is bound at residue His-143.

The protein belongs to the non-flavoprotein flavin reductase family. In terms of assembly, homodimer.

It carries out the reaction FADH2 + NAD(+) = FAD + NADH + 2 H(+). Its pathway is antibiotic biosynthesis. With respect to regulation, the SgcE6-SgcC hydroxylation activity decreases in the presence of excess FAD. Reductase component of a two-component system involved in the biosynthesis of the enediyne antitumor antibiotic C-1027. SgcE6 provides the FADH(2) required by both the halogenase SgcC3 and the monooxygenase SgcC through free diffusion. Accepts only NADH and FAD as substrates. This Streptomyces globisporus protein is NADH-dependent FAD reductase.